Consider the following 387-residue polypeptide: 3-ketoacyl-CoA thiolase (387 aa).

Cys-91 functions as the Acyl-thioester intermediate in the catalytic mechanism. Catalysis depends on proton acceptor residues His-343 and Cys-373.

The protein belongs to the thiolase-like superfamily. Thiolase family. As to quaternary structure, heterotetramer of two alpha chains (FadB) and two beta chains (FadA).

It is found in the cytoplasm. It carries out the reaction an acyl-CoA + acetyl-CoA = a 3-oxoacyl-CoA + CoA. The protein operates within lipid metabolism; fatty acid beta-oxidation. Its function is as follows. Catalyzes the final step of fatty acid oxidation in which acetyl-CoA is released and the CoA ester of a fatty acid two carbons shorter is formed. The polypeptide is 3-ketoacyl-CoA thiolase (Shewanella baltica (strain OS185)).